Consider the following 739-residue polypeptide: Phosphoribosylformylglycinamidine synthase subunit PurL (739 aa).

Residue His-54 is part of the active site. ATP-binding residues include Tyr-57 and Lys-96. Glu-98 serves as a coordination point for Mg(2+). Substrate-binding positions include 99-102 (SHNH) and Arg-121. His-100 serves as the catalytic Proton acceptor. Asp-122 serves as a coordination point for Mg(2+). Gln-245 contacts substrate. Mg(2+) is bound at residue Asp-273. A substrate-binding site is contributed by 317-319 (ESQ). Residues Asp-500 and Gly-537 each contribute to the ATP site. Asn-538 serves as a coordination point for Mg(2+). Ser-540 is a substrate binding site.

It belongs to the FGAMS family. Monomer. Part of the FGAM synthase complex composed of 1 PurL, 1 PurQ and 2 PurS subunits.

It is found in the cytoplasm. The enzyme catalyses N(2)-formyl-N(1)-(5-phospho-beta-D-ribosyl)glycinamide + L-glutamine + ATP + H2O = 2-formamido-N(1)-(5-O-phospho-beta-D-ribosyl)acetamidine + L-glutamate + ADP + phosphate + H(+). It participates in purine metabolism; IMP biosynthesis via de novo pathway; 5-amino-1-(5-phospho-D-ribosyl)imidazole from N(2)-formyl-N(1)-(5-phospho-D-ribosyl)glycinamide: step 1/2. In terms of biological role, part of the phosphoribosylformylglycinamidine synthase complex involved in the purines biosynthetic pathway. Catalyzes the ATP-dependent conversion of formylglycinamide ribonucleotide (FGAR) and glutamine to yield formylglycinamidine ribonucleotide (FGAM) and glutamate. The FGAM synthase complex is composed of three subunits. PurQ produces an ammonia molecule by converting glutamine to glutamate. PurL transfers the ammonia molecule to FGAR to form FGAM in an ATP-dependent manner. PurS interacts with PurQ and PurL and is thought to assist in the transfer of the ammonia molecule from PurQ to PurL. This Bacillus cereus (strain ATCC 14579 / DSM 31 / CCUG 7414 / JCM 2152 / NBRC 15305 / NCIMB 9373 / NCTC 2599 / NRRL B-3711) protein is Phosphoribosylformylglycinamidine synthase subunit PurL.